We begin with the raw amino-acid sequence, 104 residues long: NADH-quinone oxidoreductase subunit K (104 aa).

Transmembrane regions (helical) follow at residues 4–24 (VPAS…LFGA), 31–51 (VIVL…LVAF), and 67–87 (LFTM…LIAL).

It belongs to the complex I subunit 4L family. As to quaternary structure, NDH-1 is composed of 14 different subunits. Subunits NuoA, H, J, K, L, M, N constitute the membrane sector of the complex.

It localises to the cell membrane. It carries out the reaction a quinone + NADH + 5 H(+)(in) = a quinol + NAD(+) + 4 H(+)(out). Its function is as follows. NDH-1 shuttles electrons from NADH, via FMN and iron-sulfur (Fe-S) centers, to quinones in the respiratory chain. The immediate electron acceptor for the enzyme in this species is believed to be a menaquinone. Couples the redox reaction to proton translocation (for every two electrons transferred, four hydrogen ions are translocated across the cytoplasmic membrane), and thus conserves the redox energy in a proton gradient. This Bacillus cereus (strain AH187) protein is NADH-quinone oxidoreductase subunit K.